Reading from the N-terminus, the 208-residue chain is Holliday junction branch migration complex subunit RuvA (208 aa).

The segment at 1 to 64 is domain I; the sequence is MIGKLKGIVD…EDMIRLYGFR (64 aa). Residues 65-143 are domain II; the sequence is VDAEREWFRL…AFAPIDPALI (79 aa). The flexible linker stretch occupies residues 144 to 152; the sequence is ALTGAVEDR. The interval 153–208 is domain III; it reads TAPQPVADAISALVNLGYAQIQASAAIAAALKGLGEEAGTVEAKTLIRLGLRELAR.

The protein belongs to the RuvA family. As to quaternary structure, homotetramer. Forms an RuvA(8)-RuvB(12)-Holliday junction (HJ) complex. HJ DNA is sandwiched between 2 RuvA tetramers; dsDNA enters through RuvA and exits via RuvB. An RuvB hexamer assembles on each DNA strand where it exits the tetramer. Each RuvB hexamer is contacted by two RuvA subunits (via domain III) on 2 adjacent RuvB subunits; this complex drives branch migration. In the full resolvosome a probable DNA-RuvA(4)-RuvB(12)-RuvC(2) complex forms which resolves the HJ.

Its subcellular location is the cytoplasm. Its function is as follows. The RuvA-RuvB-RuvC complex processes Holliday junction (HJ) DNA during genetic recombination and DNA repair, while the RuvA-RuvB complex plays an important role in the rescue of blocked DNA replication forks via replication fork reversal (RFR). RuvA specifically binds to HJ cruciform DNA, conferring on it an open structure. The RuvB hexamer acts as an ATP-dependent pump, pulling dsDNA into and through the RuvAB complex. HJ branch migration allows RuvC to scan DNA until it finds its consensus sequence, where it cleaves and resolves the cruciform DNA. The protein is Holliday junction branch migration complex subunit RuvA of Methylorubrum extorquens (strain CM4 / NCIMB 13688) (Methylobacterium extorquens).